We begin with the raw amino-acid sequence, 186 residues long: Methyl-CpG-binding domain-containing protein 4 (186 aa).

A CW-type zinc finger spans residues 22-77 (GRLIDTYAAQCDNCHKWRVIDSQEEYEDIRSKMLEDPFNCQKKQGMSCEEPADIDY). Positions 31–69 (QCDNCHKWRVIDSQEEYEDIRSKMLEDPFNCQKKQGMSC) match the MBD-associated domain (MAD) motif. 4 residues coordinate Zn(2+): Cys32, Cys35, Cys61, and Cys69. Residues 83-153 (WVIDKPGLPK…GDFNFTVPKV (71 aa)) enclose the MBD domain. The tract at residues 154–186 (MEDTVPPDPKLGSPFPSTTTTTSEKSSVKQSHN) is disordered. The segment covering 166–178 (SPFPSTTTTTSEK) has biased composition (low complexity).

Expressed in rosette leaves, buds, flowers, stems, mature seeds and roots.

The protein resides in the nucleus. In terms of biological role, transcriptional regulator that binds CpG, CpNpN and CpNpG (N is A, T, or C) islands in promoters regardless the DNA methylation status. Plays probably a role in gene silencing. The chain is Methyl-CpG-binding domain-containing protein 4 (MBD4) from Arabidopsis thaliana (Mouse-ear cress).